A 1872-amino-acid polypeptide reads, in one-letter code: Chitin synthase 6 (1872 aa).

The tract at residues 1–23 (MAQHLPPVGGNGGAHTQPSLPAL) is disordered. Residues 1–779 (MAQHLPPVGG…CWMEIAQLSD (779 aa)) enclose the Myosin motor domain. Residue 104 to 111 (GESGSGKT) coordinates ATP. N-linked (GlcNAc...) asparagine glycans are attached at residues asparagine 123, asparagine 291, asparagine 428, and asparagine 559. Residues 587–652 (VMQASVSSKP…VNKPSEEGAS (66 aa)) form a disordered region. The tract at residues 659–683 (LDNVTKSFHAQNTNAYFVFCLKPND) is actin-binding. N-linked (GlcNAc...) asparagine glycosylation is present at asparagine 661. The next 2 membrane-spanning stretches (helical) occupy residues 881-901 (WVFITWMLTFFVPEFLIQHLG) and 920-940 (FIIWFSCLAAAFILVVFPMLV). In terms of domain architecture, Cytochrome b5 heme-binding spans 944–1003 (QYVFTGEELSAYNGKDGKASYAAIRGQVFDIGSFIPRHPLPYLPSKLFTQYAGTDITGLF). Asparagine 1030, asparagine 1055, and asparagine 1120 each carry an N-linked (GlcNAc...) asparagine glycan. The helical transmembrane segment at 1193–1213 (FILAVTIILCSIIAFKFLAAL) threads the bilayer. Residues asparagine 1450 and asparagine 1556 are each glycosylated (N-linked (GlcNAc...) asparagine). 3 helical membrane passes run 1581–1601 (FIVFIDLLSTIIQPVTIAYIV), 1614–1634 (VPVLAFVLLAAVYGLQAIIFI), and 1641–1661 (MIAWMILYIIAMPIFSFGLPL). The 56-residue stretch at 1814 to 1869 (LPSDDALLAEIREILRTADLMTVTKKGVKQELERRFGVNLDSRRAYINSATEALLS) folds into the DEK-C domain.

This sequence belongs to the chitin synthase family. Class V subfamily.

It localises to the cell membrane. It catalyses the reaction [(1-&gt;4)-N-acetyl-beta-D-glucosaminyl](n) + UDP-N-acetyl-alpha-D-glucosamine = [(1-&gt;4)-N-acetyl-beta-D-glucosaminyl](n+1) + UDP + H(+). Functionally, polymerizes chitin, a structural polymer of the cell wall and septum, by transferring the sugar moiety of UDP-GlcNAc to the non-reducing end of the growing chitin polymer. Required for appressorium penetration and invasive growth. The chain is Chitin synthase 6 from Pyricularia oryzae (strain 70-15 / ATCC MYA-4617 / FGSC 8958) (Rice blast fungus).